The sequence spans 43 residues: uncharacterized protein (43 aa).

A disordered region spans residues 13–43 (QLPRLSRPRQSHLPAQTPQPRLSYPKTRRQI).

This is an uncharacterized protein from Clover yellow mosaic virus (CYMV).